Reading from the N-terminus, the 212-residue chain is Pyridoxine/pyridoxamine 5'-phosphate oxidase (212 aa).

Residues 9-12 (RKSY) and K67 each bind substrate. FMN-binding positions include 62–67 (RIVLIK), 77–78 (FT), R83, and K84. Substrate-binding residues include Y124, R128, and S132. Residues 141–142 (QS) and W185 each bind FMN. Residue 191-193 (RLH) coordinates substrate. An FMN-binding site is contributed by R195.

It belongs to the pyridoxamine 5'-phosphate oxidase family. In terms of assembly, homodimer. The cofactor is FMN.

The catalysed reaction is pyridoxamine 5'-phosphate + O2 + H2O = pyridoxal 5'-phosphate + H2O2 + NH4(+). It catalyses the reaction pyridoxine 5'-phosphate + O2 = pyridoxal 5'-phosphate + H2O2. It functions in the pathway cofactor metabolism; pyridoxal 5'-phosphate salvage; pyridoxal 5'-phosphate from pyridoxamine 5'-phosphate: step 1/1. It participates in cofactor metabolism; pyridoxal 5'-phosphate salvage; pyridoxal 5'-phosphate from pyridoxine 5'-phosphate: step 1/1. In terms of biological role, catalyzes the oxidation of either pyridoxine 5'-phosphate (PNP) or pyridoxamine 5'-phosphate (PMP) into pyridoxal 5'-phosphate (PLP). This is Pyridoxine/pyridoxamine 5'-phosphate oxidase from Verminephrobacter eiseniae (strain EF01-2).